A 277-amino-acid polypeptide reads, in one-letter code: MNVINGKKIAQNLQASIKLKVDTLDRKPGLAVILVGDDDASEVYIRNKEDACKEVGFYLEIINRFDNISQEELLFEIERLNHDDKIDGILVQLPLPKHLDVNLVIETISPKKDVDGFHSENIGKLMQNKPFLHPCTPKGVMLMLESIEIDLVGKNCVVVGASNIVGRPMACELLNAKATVTICNSKTKNLSCKLIQADIVVVAVGIPKMIQSDWIKPGAIVIDVGINRLDNGCLVGDVDFESVRKVAGWIAPVPGGVGPMTIATLLKNTLTAYEARI.

NADP(+) contacts are provided by residues 160 to 162 (GAS), serine 185, and isoleucine 226.

This sequence belongs to the tetrahydrofolate dehydrogenase/cyclohydrolase family. In terms of assembly, homodimer.

It catalyses the reaction (6R)-5,10-methylene-5,6,7,8-tetrahydrofolate + NADP(+) = (6R)-5,10-methenyltetrahydrofolate + NADPH. The catalysed reaction is (6R)-5,10-methenyltetrahydrofolate + H2O = (6R)-10-formyltetrahydrofolate + H(+). It participates in one-carbon metabolism; tetrahydrofolate interconversion. Its function is as follows. Catalyzes the oxidation of 5,10-methylenetetrahydrofolate to 5,10-methenyltetrahydrofolate and then the hydrolysis of 5,10-methenyltetrahydrofolate to 10-formyltetrahydrofolate. In Vesicomyosocius okutanii subsp. Calyptogena okutanii (strain HA), this protein is Bifunctional protein FolD.